Reading from the N-terminus, the 430-residue chain is UDP-N-acetylglucosamine 1-carboxyvinyltransferase (430 aa).

22 to 23 contacts phosphoenolpyruvate; that stretch reads KN. A UDP-N-acetyl-alpha-D-glucosamine-binding site is contributed by Arg-102. Cys-126 acts as the Proton donor in catalysis. Cys-126 bears the 2-(S-cysteinyl)pyruvic acid O-phosphothioketal mark. UDP-N-acetyl-alpha-D-glucosamine contacts are provided by residues 131 to 135, 172 to 175, Asp-317, and Ile-339; these read RPVDL and KVSV.

It belongs to the EPSP synthase family. MurA subfamily.

It is found in the cytoplasm. The catalysed reaction is phosphoenolpyruvate + UDP-N-acetyl-alpha-D-glucosamine = UDP-N-acetyl-3-O-(1-carboxyvinyl)-alpha-D-glucosamine + phosphate. The protein operates within cell wall biogenesis; peptidoglycan biosynthesis. Functionally, cell wall formation. Adds enolpyruvyl to UDP-N-acetylglucosamine. The chain is UDP-N-acetylglucosamine 1-carboxyvinyltransferase from Allorhizobium ampelinum (strain ATCC BAA-846 / DSM 112012 / S4) (Agrobacterium vitis (strain S4)).